A 232-amino-acid chain; its full sequence is Orotidine 5'-phosphate decarboxylase (232 aa).

Residues Asp-16, Lys-38, 65–74 (DLKLHDIGNT), Thr-119, Arg-180, Gln-189, Gly-209, and Arg-210 each bind substrate. Catalysis depends on Lys-67, which acts as the Proton donor.

Belongs to the OMP decarboxylase family. Type 1 subfamily. Homodimer.

It carries out the reaction orotidine 5'-phosphate + H(+) = UMP + CO2. It functions in the pathway pyrimidine metabolism; UMP biosynthesis via de novo pathway; UMP from orotate: step 2/2. Functionally, catalyzes the decarboxylation of orotidine 5'-monophosphate (OMP) to uridine 5'-monophosphate (UMP). This is Orotidine 5'-phosphate decarboxylase from Methylorubrum extorquens (strain PA1) (Methylobacterium extorquens).